Here is a 168-residue protein sequence, read N- to C-terminus: Nucleoside deoxyribosyltransferase (168 aa).

Glu-103 functions as the Nucleophile in the catalytic mechanism.

This sequence belongs to the nucleoside deoxyribosyltransferase family.

It catalyses the reaction 2-deoxy-D-ribosyl-base(1) + base(2) = 2-deoxy-D-ribosyl-base(2) + base(1).. Its pathway is nucleotide metabolism; nucleotide salvage pathway. In terms of biological role, catalyzes the cleavage of the glycosidic bond of 2'-deoxyribonucleosides and the transfer of the deoxyribosyl moiety to an acceptor purine or pyrimidine base. The protein is Nucleoside deoxyribosyltransferase (ntd) of Limosilactobacillus fermentum (Lactobacillus fermentum).